The following is a 332-amino-acid chain: Ketol-acid reductoisomerase (NADP(+)) (332 aa).

The 181-residue stretch at 5-185 (VKVYYDDEVS…GCTRAGVIET (181 aa)) folds into the KARI N-terminal Rossmann domain. NADP(+)-binding positions include 28 to 31 (YGNQ), Arg51, Ser56, and 86 to 89 (DLVQ). Residue His111 is part of the active site. Gly137 is a binding site for NADP(+). The KARI C-terminal knotted domain maps to 186-331 (TFKDETESDL…RFIRKMSGLE (146 aa)). The Mg(2+) site is built by Asp194, Glu198, Glu230, and Glu234. Ser255 serves as a coordination point for substrate.

The protein belongs to the ketol-acid reductoisomerase family. It depends on Mg(2+) as a cofactor.

It carries out the reaction (2R)-2,3-dihydroxy-3-methylbutanoate + NADP(+) = (2S)-2-acetolactate + NADPH + H(+). It catalyses the reaction (2R,3R)-2,3-dihydroxy-3-methylpentanoate + NADP(+) = (S)-2-ethyl-2-hydroxy-3-oxobutanoate + NADPH + H(+). It functions in the pathway amino-acid biosynthesis; L-isoleucine biosynthesis; L-isoleucine from 2-oxobutanoate: step 2/4. Its pathway is amino-acid biosynthesis; L-valine biosynthesis; L-valine from pyruvate: step 2/4. Functionally, involved in the biosynthesis of branched-chain amino acids (BCAA). Catalyzes an alkyl-migration followed by a ketol-acid reduction of (S)-2-acetolactate (S2AL) to yield (R)-2,3-dihydroxy-isovalerate. In the isomerase reaction, S2AL is rearranged via a Mg-dependent methyl migration to produce 3-hydroxy-3-methyl-2-ketobutyrate (HMKB). In the reductase reaction, this 2-ketoacid undergoes a metal-dependent reduction by NADPH to yield (R)-2,3-dihydroxy-isovalerate. The sequence is that of Ketol-acid reductoisomerase (NADP(+)) from Pyrococcus abyssi (strain GE5 / Orsay).